A 31-amino-acid chain; its full sequence is Kappa-theraphotoxin-Ps1b (31 aa).

Disulfide bonds link Cys2–Cys16, Cys9–Cys21, and Cys15–Cys25. Residue Met31 is modified to Methionine amide.

Belongs to the neurotoxin 30 (phrixotoxin) family. As to expression, expressed by the venom gland.

It localises to the secreted. Functionally, potent and specific blocker of Kv4.2/KCND2 (IC(50)=34 nM) and Kv4.3/KCND3 (IC(50)=71 nM) potassium channels. Acts by altering the gating properties of these channels. The chain is Kappa-theraphotoxin-Ps1b from Paraphysa scrofa (Chilean copper tarantula).